A 466-amino-acid polypeptide reads, in one-letter code: Ribulose bisphosphate carboxylase large chain (466 aa).

N6,N6,N6-trimethyllysine is present on Lys-5. Substrate contacts are provided by Asn-114 and Thr-164. Lys-166 (proton acceptor) is an active-site residue. Lys-168 is a substrate binding site. The Mg(2+) site is built by Lys-192, Asp-194, and Glu-195. Position 192 is an N6-carboxylysine (Lys-192). The active-site Proton acceptor is His-285. The substrate site is built by Arg-286, His-318, and Ser-370.

This sequence belongs to the RuBisCO large chain family. Type I subfamily. Heterohexadecamer of 8 large chains and 8 small chains; disulfide-linked. The disulfide link is formed within the large subunit homodimers. Mg(2+) is required as a cofactor. Post-translationally, the disulfide bond which can form in the large chain dimeric partners within the hexadecamer appears to be associated with oxidative stress and protein turnover.

The protein resides in the plastid. The protein localises to the chloroplast. The enzyme catalyses 2 (2R)-3-phosphoglycerate + 2 H(+) = D-ribulose 1,5-bisphosphate + CO2 + H2O. It catalyses the reaction D-ribulose 1,5-bisphosphate + O2 = 2-phosphoglycolate + (2R)-3-phosphoglycerate + 2 H(+). Its function is as follows. RuBisCO catalyzes two reactions: the carboxylation of D-ribulose 1,5-bisphosphate, the primary event in carbon dioxide fixation, as well as the oxidative fragmentation of the pentose substrate in the photorespiration process. Both reactions occur simultaneously and in competition at the same active site. The sequence is that of Ribulose bisphosphate carboxylase large chain from Thespesia populnea (Portia tree).